The sequence spans 984 residues: Probable beta-galactosidase C (984 aa).

Residues 1 to 23 form the signal peptide; sequence MRLLSFIYLVWLALLTGTPQVSA. Substrate is bound by residues Tyr82, Asn127, Ala128, Glu129, and Asn187. Residue Glu188 is the Proton donor of the active site. A glycan (N-linked (GlcNAc...) asparagine) is linked at Asn197. Tyr251 contacts substrate. A disulfide bond links Cys257 and Cys304. N-linked (GlcNAc...) asparagine glycosylation occurs at Asn276. The active-site Nucleophile is the Glu287. Tyr353 is a binding site for substrate. N-linked (GlcNAc...) asparagine glycosylation is found at Asn391, Asn421, Asn434, Asn517, Asn602, Asn677, Asn715, Asn720, Asn759, and Asn805.

The protein belongs to the glycosyl hydrolase 35 family.

It is found in the secreted. It carries out the reaction Hydrolysis of terminal non-reducing beta-D-galactose residues in beta-D-galactosides.. Its function is as follows. Cleaves beta-linked terminal galactosyl residues from gangliosides, glycoproteins, and glycosaminoglycans. The protein is Probable beta-galactosidase C (lacC) of Aspergillus flavus (strain ATCC 200026 / FGSC A1120 / IAM 13836 / NRRL 3357 / JCM 12722 / SRRC 167).